The primary structure comprises 489 residues: NADH-quinone oxidoreductase subunit N (489 aa).

14 consecutive transmembrane segments (helical) span residues 6 to 26, 37 to 57, 66 to 86, 105 to 125, 127 to 147, 159 to 179, 204 to 224, 239 to 259, 271 to 291, 299 to 319, 329 to 349, 377 to 397, 408 to 430, and 452 to 472; these read VLFI…AVML, VFYI…PASS, LLIV…GSLA, FYLL…AHHL, AIFI…GYAF, YMVL…LIYA, ITLL…KLSL, PAPV…AVLL, FFYS…NLLA, RLLG…LIAC, VALY…VVSL, SAMT…GFIG, FHLW…YYLR, and ALTT…LLGI.

Belongs to the complex I subunit 2 family. As to quaternary structure, NDH-1 is composed of 14 different subunits. Subunits NuoA, H, J, K, L, M, N constitute the membrane sector of the complex.

It is found in the cell inner membrane. The enzyme catalyses a quinone + NADH + 5 H(+)(in) = a quinol + NAD(+) + 4 H(+)(out). Its function is as follows. NDH-1 shuttles electrons from NADH, via FMN and iron-sulfur (Fe-S) centers, to quinones in the respiratory chain. The immediate electron acceptor for the enzyme in this species is believed to be ubiquinone. Couples the redox reaction to proton translocation (for every two electrons transferred, four hydrogen ions are translocated across the cytoplasmic membrane), and thus conserves the redox energy in a proton gradient. The protein is NADH-quinone oxidoreductase subunit N of Tolumonas auensis (strain DSM 9187 / NBRC 110442 / TA 4).